The following is a 238-amino-acid chain: Pre-protein VI (238 aa).

A propeptide spanning residues 1–33 (MDAVNFSILAPRYGSHPMMSAWSGIGTSDMNGG) is cleaved from the precursor. The interval 34 to 54 (AFNWGGIWSGIKNFGSNVKNW) is amphipathic alpha-helix essential for membrane lytic activity. Positions 36-53 (NWGGIWSGIKNFGSNVKN) are involved in endosomal membrane lysis. The segment at 48-74 (GSNVKNWGSRAWNSQTGKLLRQKLNDT) is interaction with hexon protein. A Nuclear export signal motif is present at residues 67–76 (LRQKLNDTKV). Residues 153 to 156 (PPSY) carry the PPXY motif motif. The disordered stretch occupies residues 187–212 (TLELKPSDQPPPYSPQSSNMPVTAPV). A Nuclear export signal motif is present at residues 219–230 (GTLANIVGVGLS). The interval 221 to 227 (LANIVGV) is interaction with hexon protein. Positions 228–238 (GLSNVKRRRCF) are binds to importin alpha/beta, involved in hexon nuclear import. Residues 233-236 (KRRR) carry the Nuclear localization signal motif.

This sequence belongs to the adenoviridae protein VI family. In terms of assembly, interacts with hexon protein; this interaction allows nuclear import of hexon trimers and possibly pre-capsid assembly. Interacts (via C-terminal NLS) with importin alpha/beta. As to quaternary structure, interacts (via PPxY motif) with host NEDD4 ubiquitine ligase; this interaction might play a role in virus intracellular transport during entry. Part of a complex composed of the core-capsid bridging protein, the endosome lysis protein VI and the hexon-linking protein VIII; these interactions bridge the virus core to the capsid. Interacts with peripentonal hexons; this interaction stabilizes the capsid by gluing two peripentonal hexons together and joining them with an adjacent group-of-nine hexon. Heterodimer with the viral protease; disulfide-linked. Interacts with the viral protease. Ubiquitinated by Nedd4 following partial capsid disassembly; which might play a role in intracellular virus movement during entry. In terms of processing, contains the major nuclear import and export signals. Proteolytically removed during virion maturation. The processing of the C-terminus turns the precursor into a mature viral structural protein and abrogates its ability to promote hexon import and act as a potential chaperone protein.

It is found in the host nucleus. It localises to the host cytoplasm. The protein localises to the virion. Functionally, during virus assembly, promotes hexon trimers nuclear import through nuclear pore complexes via an importin alpha/beta-dependent mechanism. By analogy to herpesviruses capsid assembly, might act as a chaperone to promote the formation of the icosahedral capsid. Structural component of the virion that provides increased stability to the particle shell through its interaction with the core-capsid bridging protein and the hexon-linking protein VIII. Fibers shedding during virus entry into host cell allows the endosome lysis protein to be exposed as a membrane-lytic peptide. Exhibits pH-independent membrane fragmentation activity and probably mediates viral rapid escape from host endosome via organellar membrane lysis. It is not clear if it then remains partially associated with the capsid and involved in the intracellular microtubule-dependent transport of capsid to the nucleus, or if it is lost during endosomal penetration. In terms of biological role, cofactor that activates the viral protease. Binds to viral protease in a 1:1 ratio. The sequence is that of Pre-protein VI from Canis lupus familiaris (Dog).